Consider the following 36-residue polypeptide: Glucagon-1 (36 aa).

This sequence belongs to the glucagon family.

Its subcellular location is the secreted. Its function is as follows. Promotes hydrolysis of glycogen and lipids, and raises the blood sugar level. The protein is Glucagon-1 (gcg1) of Oreochromis niloticus (Nile tilapia).